The sequence spans 268 residues: Cell division cycle-associated protein 3 (268 aa).

2 disordered regions span residues 1–232 (MGSA…SELK) and 247–268 (GRAWEQGQDHDKENQHFPLVES). Phosphoserine occurs at positions 29 and 31. Thr-37 bears the Phosphothreonine mark. Residues Ser-44, Ser-64, and Ser-68 each carry the phosphoserine modification. The segment covering 56 to 66 (EGLKHAQDSDP) has biased composition (basic and acidic residues). The residue at position 76 (Thr-76) is a Phosphothreonine. A phosphoserine mark is found at Ser-87 and Ser-94. The segment at 91-120 (KQLSEVFETEDSKSNLPPEPVLPPEAPLSS) is F-box-like. Positions 107-116 (PPEPVLPPEA) are enriched in pro residues. Over residues 117–126 (PLSSELDLPL) the composition is skewed to low complexity. Polar residues-rich tracts occupy residues 128 to 149 (TQLSVEEQMPPWNQTEFPSKQV), 158 to 169 (PTETPVASQSSD), and 178 to 194 (PRSSGSMRNRWKPNSSK). Ser-199 carries the post-translational modification Phosphoserine. Thr-202 carries the phosphothreonine modification. Positions 205-215 (QDDNSPGTLTL) are enriched in polar residues. Ser-209 is subject to Phosphoserine. Thr-212 carries the post-translational modification Phosphothreonine. The KEN box signature appears at 258-260 (KEN).

In terms of assembly, interacts with SKP1. Part of a SCF (SKP1-cullin-F-box) protein ligase complex. In terms of processing, ubiquitinated and degraded by the APC/C-Cdh1 complex.

The protein resides in the cytoplasm. Its subcellular location is the cytosol. Its pathway is protein modification; protein ubiquitination. Its function is as follows. F-box-like protein which is required for entry into mitosis. Acts by participating in E3 ligase complexes that mediate the ubiquitination and degradation of WEE1 kinase at G2/M phase. In Homo sapiens (Human), this protein is Cell division cycle-associated protein 3 (CDCA3).